Here is a 451-residue protein sequence, read N- to C-terminus: Enolase (451 aa).

Position 163 (Gln163) interacts with (2R)-2-phosphoglycerate. Catalysis depends on Glu205, which acts as the Proton donor. Positions 258, 308, and 335 each coordinate Mg(2+). The (2R)-2-phosphoglycerate site is built by Lys360, Arg389, Ser390, and Lys411. Lys360 functions as the Proton acceptor in the catalytic mechanism.

It belongs to the enolase family. It depends on Mg(2+) as a cofactor.

The protein localises to the cytoplasm. It localises to the secreted. Its subcellular location is the cell surface. The enzyme catalyses (2R)-2-phosphoglycerate = phosphoenolpyruvate + H2O. It participates in carbohydrate degradation; glycolysis; pyruvate from D-glyceraldehyde 3-phosphate: step 4/5. Catalyzes the reversible conversion of 2-phosphoglycerate (2-PG) into phosphoenolpyruvate (PEP). It is essential for the degradation of carbohydrates via glycolysis. The sequence is that of Enolase from Mycoplasma mycoides subsp. mycoides SC (strain CCUG 32753 / NCTC 10114 / PG1).